The sequence spans 243 residues: Uridylate kinase (243 aa).

ATP is bound at residue lysine 15 to glycine 18. The interval glycine 23–glycine 28 is involved in allosteric activation by GTP. Residue glycine 57 coordinates UMP. ATP is bound by residues glycine 58 and arginine 62. Residues aspartate 77 and threonine 138–threonine 145 each bind UMP. The ATP site is built by threonine 165, phenylalanine 171, and aspartate 174.

It belongs to the UMP kinase family. As to quaternary structure, homohexamer.

The protein resides in the cytoplasm. The enzyme catalyses UMP + ATP = UDP + ADP. It functions in the pathway pyrimidine metabolism; CTP biosynthesis via de novo pathway; UDP from UMP (UMPK route): step 1/1. Its activity is regulated as follows. Allosterically activated by GTP. Inhibited by UTP. Its function is as follows. Catalyzes the reversible phosphorylation of UMP to UDP. The protein is Uridylate kinase of Aliivibrio fischeri (strain ATCC 700601 / ES114) (Vibrio fischeri).